We begin with the raw amino-acid sequence, 215 residues long: Peroxiredoxin 1 (215 aa).

The 157-residue stretch at 1-157 (MKLYQKFPET…LLRITKAALV (157 aa)) folds into the Thioredoxin domain. The Cysteine sulfenic acid (-SOH) intermediate role is filled by Cys-45. Residue Arg-120 participates in substrate binding.

The protein belongs to the peroxiredoxin family. Prx6 subfamily. As to quaternary structure, homodecamer. Pentamer of dimers that assemble into a ring structure.

The protein localises to the cytoplasm. It carries out the reaction a hydroperoxide + [thioredoxin]-dithiol = an alcohol + [thioredoxin]-disulfide + H2O. Thiol-specific peroxidase that catalyzes the reduction of hydrogen peroxide and organic hydroperoxides to water and alcohols, respectively. Plays a role in cell protection against oxidative stress by detoxifying peroxides. This is Peroxiredoxin 1 from Sulfuracidifex metallicus (Sulfolobus metallicus).